A 147-amino-acid polypeptide reads, in one-letter code: Large ribosomal subunit protein uL16c (147 aa).

Positions 1-17 (MLSPKRTRFRKQHRGRM) are enriched in basic residues. Residues 1-20 (MLSPKRTRFRKQHRGRMKGI) are disordered.

It belongs to the universal ribosomal protein uL16 family. As to quaternary structure, part of the 50S ribosomal subunit.

Its subcellular location is the plastid. It localises to the chloroplast. The protein is Large ribosomal subunit protein uL16c of Ipomoea purpurea (Common morning glory).